Here is a 448-residue protein sequence, read N- to C-terminus: Probable glycine dehydrogenase (decarboxylating) subunit 1 (448 aa).

The protein belongs to the GcvP family. N-terminal subunit subfamily. In terms of assembly, the glycine cleavage system is composed of four proteins: P, T, L and H. In this organism, the P 'protein' is a heterodimer of two subunits.

The catalysed reaction is N(6)-[(R)-lipoyl]-L-lysyl-[glycine-cleavage complex H protein] + glycine + H(+) = N(6)-[(R)-S(8)-aminomethyldihydrolipoyl]-L-lysyl-[glycine-cleavage complex H protein] + CO2. In terms of biological role, the glycine cleavage system catalyzes the degradation of glycine. The P protein binds the alpha-amino group of glycine through its pyridoxal phosphate cofactor; CO(2) is released and the remaining methylamine moiety is then transferred to the lipoamide cofactor of the H protein. The chain is Probable glycine dehydrogenase (decarboxylating) subunit 1 from Geobacillus thermodenitrificans (strain NG80-2).